We begin with the raw amino-acid sequence, 248 residues long: Ureidoacrylate amidohydrolase RutB (248 aa).

The active-site Proton acceptor is the D41. The active site involves K150. The active-site Nucleophile is the C183.

This sequence belongs to the isochorismatase family. RutB subfamily.

It catalyses the reaction (Z)-3-ureidoacrylate + H2O + H(+) = (Z)-3-aminoacrylate + NH4(+) + CO2. The enzyme catalyses (Z)-3-ureidoacrylate + H2O = (Z)-3-aminoacrylate + carbamate + H(+). It carries out the reaction (Z)-2-methylureidoacrylate + H2O + H(+) = (Z)-2-methylaminoacrylate + NH4(+) + CO2. Its function is as follows. Hydrolyzes ureidoacrylate to form aminoacrylate and carbamate. The carbamate hydrolyzes spontaneously, thereby releasing one of the nitrogen atoms of the pyrimidine ring as ammonia and one of its carbon atoms as CO2. The protein is Ureidoacrylate amidohydrolase RutB of Methylorubrum extorquens (strain ATCC 14718 / DSM 1338 / JCM 2805 / NCIMB 9133 / AM1) (Methylobacterium extorquens).